We begin with the raw amino-acid sequence, 271 residues long: Norsolorinic acid ketoreductase (271 aa).

The segment at 1 to 22 is disordered; it reads MNGSLSQHDQERLSTPYRDGPP. 6 residues coordinate NADP(+): Ile36, Asn112, Tyr185, Lys189, Val216, and Thr218. Tyr185 serves as the catalytic Proton donor. Lys189 serves as the catalytic Lowers pKa of active site Tyr.

This sequence belongs to the short-chain dehydrogenases/reductases (SDR) family.

It localises to the cytoplasm. The protein localises to the cytosol. It is found in the vacuole. The catalysed reaction is (1'S)-averantin + NADP(+) = norsolorinic acid + NADPH + H(+). The protein operates within mycotoxin biosynthesis; aflatoxin biosynthesis. In terms of biological role, norsolorinic acid ketoreductase; part of the gene cluster that mediates the biosynthesis of aflatoxins, a group of polyketide-derived furanocoumarins, and part of the most toxic and carcinogenic compounds among the known mycotoxins. The four major aflatoxins produced by A.parasiticus are aflatoxin B1 (AFB1), aflatoxin B2 (AFB2), aflatoxin G1 (AFG1) and aflatoxin G2 (AFG2). Within the aflatoxin pathway, the norsolorinic acid ketoreductase aflD performs the second step by catalyzing the dehydration of norsolorinic acid (NOR) to form (1'S)-averantin (AVN). The biosynthesis of aflatoxins begins with the norsolorinic acid synthase aflC that combines a hexanoyl starter unit produced by the fatty acid synthase aflA/aflB and 7 malonyl-CoA extender units to synthesize the precursor NOR. The second step is the conversion of NOR to averantin and requires the norsolorinic acid ketoreductase aflD, which catalyzes the dehydration of norsolorinic acid to form (1'S)-averantin. The norsolorinic acid reductases aflE and aflF may also play a role in the conversion of NOR to AVN. The cytochrome P450 monooxygenase aflG then catalyzes the hydroxylation of AVN to 5'hydroxyaverantin (HAVN). The next step is performed by the 5'-hydroxyaverantin dehydrogenase aflH that transforms HAVN to 5'-oxoaverantin (OAVN) which is further converted to averufin (AVF) by aflK that plays a dual role in the pathway, as a 5'-oxoaverantin cyclase that mediates conversion of 5'-oxoaverantin, as well as a versicolorin B synthase in a later step in the pathway. The averufin oxidase aflI catalyzes the conversion of AVF to versiconal hemiacetal acetate (VHA). VHA is then the substrate for the versiconal hemiacetal acetate esterase aflJ to yield versiconal (VAL). Versicolorin B synthase aflK then converts VAL to versicolorin B (VERB) by closing the bisfuran ring of aflatoxin which is required for DNA-binding, thus giving to aflatoxin its activity as a mutagen. Then, the activity of the versicolorin B desaturase aflL leads to versicolorin A (VERA). A branch point starts from VERB since it can also be converted to dihydrodemethylsterigmatocystin (DMDHST), probably also by aflL, VERA being a precursor for aflatoxins B1 and G1, and DMDHST for aflatoxins B2 and G2. Next, the versicolorin reductase aflM and the cytochrome P450 monooxygenase aflN are involved in conversion of VERA to demethylsterigmatocystin (DMST). AflX and aflY seem also involved in this step, through probable aflX-mediated epoxide ring-opening step following versicolorin A oxidation and aflY-mediated Baeyer-Villiger oxidation required for the formation of the xanthone ring. The methyltransferase aflO then leads to the modification of DMST to sterigmatocystin (ST), and of DMDHST to dihydrosterigmatocystin (DHST). Both ST and DHST are then substrates of the O-methyltransferase aflP to yield O-methylsterigmatocystin (OMST) and dihydro-O-methylsterigmatocystin (DHOMST), respectively. Finally OMST is converted to aflatoxins B1 and G1, and DHOMST to aflatoxins B2 and G2, via the action of several enzymes including O-methylsterigmatocystin oxidoreductase aflQ, the cytochrome P450 monooxygenase aflU, but also the NADH-dependent flavin oxidoreductase nadA which is specifically required for the synthesis of AFG1. This is Norsolorinic acid ketoreductase from Aspergillus parasiticus (strain ATCC 56775 / NRRL 5862 / SRRC 143 / SU-1).